The primary structure comprises 120 residues: Ribosome-binding factor A (120 aa).

This sequence belongs to the RbfA family. Monomer. Binds 30S ribosomal subunits, but not 50S ribosomal subunits or 70S ribosomes.

It is found in the cytoplasm. One of several proteins that assist in the late maturation steps of the functional core of the 30S ribosomal subunit. Associates with free 30S ribosomal subunits (but not with 30S subunits that are part of 70S ribosomes or polysomes). Required for efficient processing of 16S rRNA. May interact with the 5'-terminal helix region of 16S rRNA. This Clostridium botulinum (strain Loch Maree / Type A3) protein is Ribosome-binding factor A.